Reading from the N-terminus, the 491-residue chain is Fibrinogen beta chain (491 aa).

The first 30 residues, Met-1–Ser-30, serve as a signal peptide directing secretion. Gln-31 is subject to Pyrrolidone carboxylic acid. Residues Arg-44–Pro-75 form a disordered region. Residues Gly-45–Arg-47 are beta-chain polymerization, binding distal domain of another fibrin. Positions Arg-47–Pro-57 are enriched in basic and acidic residues. A coiled-coil region spans residues Lys-157–Tyr-222. 2 cysteine pairs are disulfide-bonded: Cys-231–Cys-316 and Cys-241–Cys-270. Residues Asn-232–Phe-488 enclose the Fibrinogen C-terminal domain. An N-linked (GlcNAc...) asparagine glycan is attached at Asn-394. A disulfide bridge connects residues Cys-424 and Cys-437.

In terms of assembly, heterohexamer; disulfide linked. Contains 2 sets of 3 non-identical chains (alpha, beta and gamma). The 2 heterotrimers are in head to head conformation with the N-termini in a small central domain. Post-translationally, conversion of fibrinogen to fibrin is triggered by thrombin, which cleaves fibrinopeptides A and B from alpha and beta chains, and thus exposes the N-terminal polymerization sites responsible for the formation of the soft clot. The soft clot is converted into the hard clot by factor XIIIA which catalyzes the epsilon-(gamma-glutamyl)lysine cross-linking between gamma chains (stronger) and between alpha chains (weaker) of different monomers. Detected in blood plasma (at protein level).

The protein resides in the secreted. Functionally, cleaved by the protease thrombin to yield monomers which, together with fibrinogen alpha (FGA) and fibrinogen gamma (FGG), polymerize to form an insoluble fibrin matrix. Fibrin has a major function in hemostasis as one of the primary components of blood clots. In addition, functions during the early stages of wound repair to stabilize the lesion and guide cell migration during re-epithelialization. Was originally thought to be essential for platelet aggregation, based on in vitro studies using anticoagulated blood. However subsequent studies have shown that it is not absolutely required for thrombus formation in vivo. Enhances expression of SELP in activated platelets. Maternal fibrinogen is essential for successful pregnancy. Fibrin deposition is also associated with infection, where it protects against IFNG-mediated hemorrhage. May also facilitate the antibacterial immune response via both innate and T-cell mediated pathways. In Homo sapiens (Human), this protein is Fibrinogen beta chain (FGB).